We begin with the raw amino-acid sequence, 886 residues long: Alanine--tRNA ligase (886 aa).

4 residues coordinate Zn(2+): H564, H568, C676, and H680.

The protein belongs to the class-II aminoacyl-tRNA synthetase family. Zn(2+) is required as a cofactor.

The protein localises to the cytoplasm. The catalysed reaction is tRNA(Ala) + L-alanine + ATP = L-alanyl-tRNA(Ala) + AMP + diphosphate. In terms of biological role, catalyzes the attachment of alanine to tRNA(Ala) in a two-step reaction: alanine is first activated by ATP to form Ala-AMP and then transferred to the acceptor end of tRNA(Ala). Also edits incorrectly charged Ser-tRNA(Ala) and Gly-tRNA(Ala) via its editing domain. This Bartonella bacilliformis protein is Alanine--tRNA ligase.